Consider the following 497-residue polypeptide: Meiosis-specific serine/threonine-protein kinase MEK1 (497 aa).

In terms of domain architecture, FHA spans 47-102; the sequence is VKVGRNDKECQLVLTNPSISSVHCVFWCVFFDEDSIPMFYVKDCSLNGTYLNGLLL. The 283-residue stretch at 162 to 444 folds into the Protein kinase domain; sequence EITNRIVGNG…SKQGLKHIWI (283 aa). Residues 168-176 and lysine 199 contribute to the ATP site; that span reads VGNGTFGHV. Aspartate 290 acts as the Proton acceptor in catalysis.

It belongs to the protein kinase superfamily. CAMK Ser/Thr protein kinase family. CHEK2 subfamily.

It catalyses the reaction L-seryl-[protein] + ATP = O-phospho-L-seryl-[protein] + ADP + H(+). It carries out the reaction L-threonyl-[protein] + ATP = O-phospho-L-threonyl-[protein] + ADP + H(+). Functionally, probable protein kinase required for meiotic recombination. This is Meiosis-specific serine/threonine-protein kinase MEK1 (MEK1) from Saccharomyces cerevisiae (strain ATCC 204508 / S288c) (Baker's yeast).